A 635-amino-acid chain; its full sequence is Threonine--tRNA ligase (635 aa).

A TGS domain is found at 1 to 61; sequence MINISFPDGS…DNDCKFRILT (61 aa). A catalytic region spans residues 242-533; sequence DHRKLGRELD…LIEEYAGRFP (292 aa). Zn(2+) is bound by residues Cys333, His384, and His510.

It belongs to the class-II aminoacyl-tRNA synthetase family. As to quaternary structure, homodimer. Zn(2+) is required as a cofactor.

Its subcellular location is the cytoplasm. The enzyme catalyses tRNA(Thr) + L-threonine + ATP = L-threonyl-tRNA(Thr) + AMP + diphosphate + H(+). Its function is as follows. Catalyzes the attachment of threonine to tRNA(Thr) in a two-step reaction: L-threonine is first activated by ATP to form Thr-AMP and then transferred to the acceptor end of tRNA(Thr). Also edits incorrectly charged L-seryl-tRNA(Thr). In Rickettsia rickettsii (strain Sheila Smith), this protein is Threonine--tRNA ligase.